The primary structure comprises 149 residues: 17 kDa major membrane protein (149 aa).

A signal peptide spans 1–19 (MKKIIKLSLLSLSIAGLAS). C20 carries N-palmitoyl cysteine lipidation. A lipid anchor (S-diacylglycerol cysteine) is attached at C20.

Its subcellular location is the cell outer membrane. This chain is 17 kDa major membrane protein, found in Francisella tularensis subsp. holarctica (strain LVS).